The sequence spans 221 residues: Octanoyltransferase (221 aa).

The 186-residue stretch at 36–221 (KKEDNQLFFC…LRSIFMEIFA (186 aa)) folds into the BPL/LPL catalytic domain. Residues 81–88 (RGGDITYH), 154–156 (AIG), and 167–169 (GFA) each bind substrate. Catalysis depends on Cys-185, which acts as the Acyl-thioester intermediate.

The protein belongs to the LipB family.

It is found in the cytoplasm. The catalysed reaction is octanoyl-[ACP] + L-lysyl-[protein] = N(6)-octanoyl-L-lysyl-[protein] + holo-[ACP] + H(+). It functions in the pathway protein modification; protein lipoylation via endogenous pathway; protein N(6)-(lipoyl)lysine from octanoyl-[acyl-carrier-protein]: step 1/2. Functionally, catalyzes the transfer of endogenously produced octanoic acid from octanoyl-acyl-carrier-protein onto the lipoyl domains of lipoate-dependent enzymes. Lipoyl-ACP can also act as a substrate although octanoyl-ACP is likely to be the physiological substrate. In Parabacteroides distasonis (strain ATCC 8503 / DSM 20701 / CIP 104284 / JCM 5825 / NCTC 11152), this protein is Octanoyltransferase.